The following is a 275-amino-acid chain: Large ribosomal subunit protein uL2 (275 aa).

The interval 223 to 275 (VAMNPIDHPHGGGEGRTSGGRHPVSPWGVPTKGYKTRSNKRTDKYIVRRRNKK) is disordered.

This sequence belongs to the universal ribosomal protein uL2 family. Part of the 50S ribosomal subunit. Forms a bridge to the 30S subunit in the 70S ribosome.

In terms of biological role, one of the primary rRNA binding proteins. Required for association of the 30S and 50S subunits to form the 70S ribosome, for tRNA binding and peptide bond formation. It has been suggested to have peptidyltransferase activity; this is somewhat controversial. Makes several contacts with the 16S rRNA in the 70S ribosome. The chain is Large ribosomal subunit protein uL2 from Shewanella woodyi (strain ATCC 51908 / MS32).